Here is a 467-residue protein sequence, read N- to C-terminus: UDP-N-acetylmuramate--L-alanine ligase (467 aa).

An ATP-binding site is contributed by Gly-112–Thr-118.

It belongs to the MurCDEF family.

Its subcellular location is the cytoplasm. It carries out the reaction UDP-N-acetyl-alpha-D-muramate + L-alanine + ATP = UDP-N-acetyl-alpha-D-muramoyl-L-alanine + ADP + phosphate + H(+). The protein operates within cell wall biogenesis; peptidoglycan biosynthesis. Its function is as follows. Cell wall formation. This is UDP-N-acetylmuramate--L-alanine ligase from Paraburkholderia phytofirmans (strain DSM 17436 / LMG 22146 / PsJN) (Burkholderia phytofirmans).